A 646-amino-acid polypeptide reads, in one-letter code: Acetyl-coenzyme A synthetase (646 aa).

Residues 189-192 (RGPK), T307, and N331 contribute to the CoA site. ATP contacts are provided by residues 383-385 (GEP), 407-412 (DTWWQT), D496, and R511. Position 519 (S519) interacts with CoA. R522 lines the ATP pocket. Residues V533, H535, and V538 each coordinate Mg(2+). CoA is bound at residue R580. N6-acetyllysine is present on K605.

The protein belongs to the ATP-dependent AMP-binding enzyme family. It depends on Mg(2+) as a cofactor. Acetylated. Deacetylation by the SIR2-homolog deacetylase activates the enzyme.

The enzyme catalyses acetate + ATP + CoA = acetyl-CoA + AMP + diphosphate. In terms of biological role, catalyzes the conversion of acetate into acetyl-CoA (AcCoA), an essential intermediate at the junction of anabolic and catabolic pathways. AcsA undergoes a two-step reaction. In the first half reaction, AcsA combines acetate with ATP to form acetyl-adenylate (AcAMP) intermediate. In the second half reaction, it can then transfer the acetyl group from AcAMP to the sulfhydryl group of CoA, forming the product AcCoA. The chain is Acetyl-coenzyme A synthetase from Desulfatibacillum aliphaticivorans.